Here is a 368-residue protein sequence, read N- to C-terminus: Phospho-N-acetylmuramoyl-pentapeptide-transferase (368 aa).

The next 10 membrane-spanning stretches (helical) occupy residues 32 to 52, 79 to 99, 102 to 122, 140 to 160, 176 to 196, 207 to 227, 247 to 267, 271 to 291, 296 to 316, and 345 to 365; these read TGGA…WIID, TPTM…VLWA, LNPY…IGFY, TRLL…IRLG, VVVD…VGAG, GLAI…AYLA, LAVL…FNAP, IFMG…IAVA, IVLA…IVQV, and QIVI…LSTL.

This sequence belongs to the glycosyltransferase 4 family. MraY subfamily. It depends on Mg(2+) as a cofactor.

The protein localises to the cell inner membrane. The catalysed reaction is UDP-N-acetyl-alpha-D-muramoyl-L-alanyl-gamma-D-glutamyl-meso-2,6-diaminopimeloyl-D-alanyl-D-alanine + di-trans,octa-cis-undecaprenyl phosphate = di-trans,octa-cis-undecaprenyl diphospho-N-acetyl-alpha-D-muramoyl-L-alanyl-D-glutamyl-meso-2,6-diaminopimeloyl-D-alanyl-D-alanine + UMP. It participates in cell wall biogenesis; peptidoglycan biosynthesis. Catalyzes the initial step of the lipid cycle reactions in the biosynthesis of the cell wall peptidoglycan: transfers peptidoglycan precursor phospho-MurNAc-pentapeptide from UDP-MurNAc-pentapeptide onto the lipid carrier undecaprenyl phosphate, yielding undecaprenyl-pyrophosphoryl-MurNAc-pentapeptide, known as lipid I. In Nitrobacter hamburgensis (strain DSM 10229 / NCIMB 13809 / X14), this protein is Phospho-N-acetylmuramoyl-pentapeptide-transferase.